The chain runs to 187 residues: Ribonuclease M5 (187 aa).

The 84-residue stretch at 5–88 (KEVIVVEGKD…AFLPRKAGVP (84 aa)) folds into the Toprim domain. Mg(2+) is bound by residues E11, D57, and D59.

This sequence belongs to the ribonuclease M5 family. Requires Mg(2+) as cofactor.

The protein resides in the cytoplasm. It carries out the reaction Endonucleolytic cleavage of RNA, removing 21 and 42 nucleotides, respectively, from the 5'- and 3'-termini of a 5S-rRNA precursor.. In terms of biological role, required for correct processing of both the 5' and 3' ends of 5S rRNA precursor. Cleaves both sides of a double-stranded region yielding mature 5S rRNA in one step. The sequence is that of Ribonuclease M5 from Lactiplantibacillus plantarum (strain ATCC BAA-793 / NCIMB 8826 / WCFS1) (Lactobacillus plantarum).